Reading from the N-terminus, the 256-residue chain is 5-oxoprolinase subunit A 1 (256 aa).

It belongs to the LamB/PxpA family. As to quaternary structure, forms a complex composed of PxpA, PxpB and PxpC.

The catalysed reaction is 5-oxo-L-proline + ATP + 2 H2O = L-glutamate + ADP + phosphate + H(+). Functionally, catalyzes the cleavage of 5-oxoproline to form L-glutamate coupled to the hydrolysis of ATP to ADP and inorganic phosphate. In Pseudomonas syringae pv. tomato (strain ATCC BAA-871 / DC3000), this protein is 5-oxoprolinase subunit A 1.